The sequence spans 252 residues: Imidazole glycerol phosphate synthase subunit HisF (252 aa).

Residues Asp-11 and Asp-130 contribute to the active site.

Belongs to the HisA/HisF family. As to quaternary structure, heterodimer of HisH and HisF.

It is found in the cytoplasm. The catalysed reaction is 5-[(5-phospho-1-deoxy-D-ribulos-1-ylimino)methylamino]-1-(5-phospho-beta-D-ribosyl)imidazole-4-carboxamide + L-glutamine = D-erythro-1-(imidazol-4-yl)glycerol 3-phosphate + 5-amino-1-(5-phospho-beta-D-ribosyl)imidazole-4-carboxamide + L-glutamate + H(+). It participates in amino-acid biosynthesis; L-histidine biosynthesis; L-histidine from 5-phospho-alpha-D-ribose 1-diphosphate: step 5/9. IGPS catalyzes the conversion of PRFAR and glutamine to IGP, AICAR and glutamate. The HisF subunit catalyzes the cyclization activity that produces IGP and AICAR from PRFAR using the ammonia provided by the HisH subunit. This is Imidazole glycerol phosphate synthase subunit HisF from Moorella thermoacetica (strain ATCC 39073 / JCM 9320).